The chain runs to 600 residues: Alpha pinene synthase, chloroplastic (600 aa).

Residues 1–26 (MSSISMHARPLNISAANNHHPSWDRR) form a disordered region. Residues 1–31 (MSSISMHARPLNISAANNHHPSWDRRVSKPR) constitute a chloroplast transit peptide. The Mg(2+) site is built by aspartate 354, aspartate 358, aspartate 498, and glutamate 506. The DDXXD motif motif lies at 354–358 (DDVYD).

This sequence belongs to the terpene synthase family. Tpsa subfamily. The cofactor is Mg(2+). Mn(2+) is required as a cofactor. As to expression, barely detectable in leaves.

The protein resides in the plastid. It localises to the chloroplast. It catalyses the reaction (2E)-geranyl diphosphate = alpha-pinene + diphosphate. It functions in the pathway secondary metabolite biosynthesis; terpenoid biosynthesis. Functionally, monoterpene synthase involved in the biosynthesis of volatile compounds widely used in aromatherapy and folk medicine, and present in culinary herbs. Mediates the conversion of (2E)-geranyl diphosphate (GPP) into alpha-pinene and, as minor compounds, into alpha-phellandrene, limonene and alpha-terpinolene. The chain is Alpha pinene synthase, chloroplastic from Lavandula stoechas (Butterfly lavender).